The primary structure comprises 317 residues: Type II methyltransferase M.NgoBI (317 aa).

The SAM-dependent MTase C5-type domain maps to 2-302 (YKTIDLFSGI…KICSLLFPAR (301 aa)). C71 is an active-site residue.

The protein belongs to the class I-like SAM-binding methyltransferase superfamily. C5-methyltransferase family.

The catalysed reaction is a 2'-deoxycytidine in DNA + S-adenosyl-L-methionine = a 5-methyl-2'-deoxycytidine in DNA + S-adenosyl-L-homocysteine + H(+). A methylase, recognizes the double-stranded sequence 5'-RGCGCY-3', methylates C-5 on both strands, and protects the DNA from cleavage by the NgoBI endonuclease. The chain is Type II methyltransferase M.NgoBI (ngoBIM) from Neisseria gonorrhoeae.